Reading from the N-terminus, the 83-residue chain is Mu-theraphotoxin-Hhn2l (83 aa).

The N-terminal stretch at 1–21 is a signal peptide; it reads MKASMFLALAGLVLLFVVGYA. Positions 22-48 are excised as a propeptide; sequence SESEEKEFPIELLSKIFAVDVFKGEER. 3 cysteine pairs are disulfide-bonded: cysteine 50–cysteine 65, cysteine 57–cysteine 70, and cysteine 64–cysteine 77. Residue leucine 81 is modified to Leucine amide.

The protein belongs to the neurotoxin 10 (Hwtx-1) family. 15 (Hntx-3) subfamily. Monomer. As to expression, expressed by the venom gland.

Its subcellular location is the secreted. Functionally, lethal neurotoxin. Selectively blocks tetrodotoxin-sensitive voltage-gated sodium channels (Nav). Does not affect tetrodotoxin-resistant voltage-gated sodium channels or calcium channels. This chain is Mu-theraphotoxin-Hhn2l, found in Cyriopagopus hainanus (Chinese bird spider).